The chain runs to 440 residues: Trigger factor (440 aa).

The 97-residue stretch at 161–257 folds into the PPIase FKBP-type domain; that stretch reads GDYVKLAYEG…VLEVRERVLP (97 aa).

It belongs to the FKBP-type PPIase family. Tig subfamily.

It is found in the cytoplasm. It carries out the reaction [protein]-peptidylproline (omega=180) = [protein]-peptidylproline (omega=0). In terms of biological role, involved in protein export. Acts as a chaperone by maintaining the newly synthesized protein in an open conformation. Functions as a peptidyl-prolyl cis-trans isomerase. This chain is Trigger factor, found in Opitutus terrae (strain DSM 11246 / JCM 15787 / PB90-1).